Here is a 160-residue protein sequence, read N- to C-terminus: Na(+)/H(+) antiporter subunit E1 (160 aa).

The next 4 helical transmembrane spans lie at 1 to 21, 27 to 47, 49 to 69, and 101 to 121; these read MAIQ…VTGS, FILG…VLPG, FYLI…IELI, and WQIV…VLGI.

It belongs to the CPA3 antiporters (TC 2.A.63) subunit E family. May form a heterooligomeric complex that consists of seven subunits: mnhA1, mnhB1, mnhC1, mnhD1, mnhE1, mnhF1 and mnhG1.

It localises to the cell membrane. Functionally, mnh complex is a Na(+)/H(+) antiporter involved in Na(+) excretion. In Staphylococcus saprophyticus subsp. saprophyticus (strain ATCC 15305 / DSM 20229 / NCIMB 8711 / NCTC 7292 / S-41), this protein is Na(+)/H(+) antiporter subunit E1 (mnhE1).